The primary structure comprises 554 residues: Glucose-6-phosphate isomerase (554 aa).

The Proton donor role is filled by glutamate 359. Residues histidine 390 and lysine 518 contribute to the active site.

This sequence belongs to the GPI family.

Its subcellular location is the cytoplasm. It catalyses the reaction alpha-D-glucose 6-phosphate = beta-D-fructose 6-phosphate. It functions in the pathway carbohydrate biosynthesis; gluconeogenesis. The protein operates within carbohydrate degradation; glycolysis; D-glyceraldehyde 3-phosphate and glycerone phosphate from D-glucose: step 2/4. Its function is as follows. Catalyzes the reversible isomerization of glucose-6-phosphate to fructose-6-phosphate. The polypeptide is Glucose-6-phosphate isomerase (Pseudomonas putida (strain W619)).